The primary structure comprises 117 residues: Protein OPG035 (117 aa).

It belongs to the poxviridae OPG035 family.

Functionally, bcl-2-like protein which contributes to virulence by preventing host NF-kappa-B activation in response to pro-inflammatory stimuli such as TNF-alpha or IL1B. The sequence is that of Protein OPG035 (OPG035) from Monkeypox virus.